A 141-amino-acid polypeptide reads, in one-letter code: Putative pre-16S rRNA nuclease (141 aa).

Belongs to the YqgF nuclease family.

It localises to the cytoplasm. Could be a nuclease involved in processing of the 5'-end of pre-16S rRNA. In Vibrio parahaemolyticus serotype O3:K6 (strain RIMD 2210633), this protein is Putative pre-16S rRNA nuclease.